A 563-amino-acid chain; its full sequence is NAD-dependent malic enzyme (563 aa).

Tyr101 functions as the Proton donor in the catalytic mechanism. NAD(+) is bound at residue Arg154. The Proton acceptor role is filled by Lys172. Positions 243, 244, and 267 each coordinate a divalent metal cation. The NAD(+) site is built by Asp267 and Asn416.

The protein belongs to the malic enzymes family. As to quaternary structure, homotetramer. It depends on Mg(2+) as a cofactor. Requires Mn(2+) as cofactor.

It catalyses the reaction (S)-malate + NAD(+) = pyruvate + CO2 + NADH. It carries out the reaction oxaloacetate + H(+) = pyruvate + CO2. In Pseudomonas syringae pv. tomato (strain ATCC BAA-871 / DC3000), this protein is NAD-dependent malic enzyme.